The primary structure comprises 442 residues: Testican-1 (442 aa).

The N-terminal stretch at 1 to 21 (MPAIAVLAAAAAAWCFLQVDS) is a signal peptide. 8 cysteine pairs are disulfide-bonded: Cys89/Cys100, Cys94/Cys110, Cys139/Cys169, Cys142/Cys162, Cys151/Cys183, Cys316/Cys340, Cys351/Cys358, and Cys360/Cys379. The 53-residue stretch at 133–185 (PSNLVKCKPCPVAQSAMVCGSDGHTYTSKCKLEFHACSTGKSLNSLCDGPCPC) folds into the Kazal-like domain. Positions 313 to 379 (GLPCQNEMNR…GSRKQGTVSC (67 aa)) constitute a Thyroglobulin type-1 domain. Disordered stretches follow at residues 375-395 (GTVS…GGSV) and 420-442 (TRAV…GYIW). 2 O-linked (Xyl...) (glycosaminoglycan) serine glycosylation sites follow: Ser386 and Ser391. The segment covering 425-442 (EDDEDEDDDKEDEVGYIW) has biased composition (acidic residues).

In terms of processing, contains chondroitin sulfate and heparan sulfate O-linked oligosaccharides. Predominantly expressed in the postsynaptic area of pyramidal neurons.

The protein localises to the secreted. It is found in the extracellular space. It localises to the extracellular matrix. In terms of biological role, may play a role in cell-cell and cell-matrix interactions. May contribute to various neuronal mechanisms in the central nervous system. The sequence is that of Testican-1 (Spock1) from Mus musculus (Mouse).